The sequence spans 98 residues: Large ribosomal subunit protein uL23 (98 aa).

The protein belongs to the universal ribosomal protein uL23 family. As to quaternary structure, part of the 50S ribosomal subunit. Contacts protein L29, and trigger factor when it is bound to the ribosome.

One of the early assembly proteins it binds 23S rRNA. One of the proteins that surrounds the polypeptide exit tunnel on the outside of the ribosome. Forms the main docking site for trigger factor binding to the ribosome. The protein is Large ribosomal subunit protein uL23 of Methylobacterium nodulans (strain LMG 21967 / CNCM I-2342 / ORS 2060).